A 285-amino-acid chain; its full sequence is Probable ribosomal RNA small subunit methyltransferase A (285 aa).

Residues His29, Leu31, Gly58, Glu79, Asp107, and Asn122 each coordinate S-adenosyl-L-methionine.

The protein belongs to the class I-like SAM-binding methyltransferase superfamily. rRNA adenine N(6)-methyltransferase family. RsmA subfamily.

The protein localises to the cytoplasm. Its function is as follows. Specifically dimethylates two adjacent adenosines in the loop of a conserved hairpin near the 3'-end of 16S rRNA in the 30S particle. May play a critical role in biogenesis of 30S subunits. This is Probable ribosomal RNA small subunit methyltransferase A from Haloarcula marismortui (strain ATCC 43049 / DSM 3752 / JCM 8966 / VKM B-1809) (Halobacterium marismortui).